The sequence spans 156 residues: Small ribosomal subunit protein uS7 (156 aa).

Belongs to the universal ribosomal protein uS7 family. Part of the 30S ribosomal subunit. Contacts proteins S9 and S11.

Its function is as follows. One of the primary rRNA binding proteins, it binds directly to 16S rRNA where it nucleates assembly of the head domain of the 30S subunit. Is located at the subunit interface close to the decoding center, probably blocks exit of the E-site tRNA. The chain is Small ribosomal subunit protein uS7 from Geobacillus sp. (strain WCH70).